Reading from the N-terminus, the 120-residue chain is Large ribosomal subunit protein uL18 (120 aa).

The protein belongs to the universal ribosomal protein uL18 family. Part of the 50S ribosomal subunit; part of the 5S rRNA/L5/L18/L25 subcomplex. Contacts the 5S and 23S rRNAs.

This is one of the proteins that bind and probably mediate the attachment of the 5S RNA into the large ribosomal subunit, where it forms part of the central protuberance. The protein is Large ribosomal subunit protein uL18 of Methylorubrum populi (strain ATCC BAA-705 / NCIMB 13946 / BJ001) (Methylobacterium populi).